The chain runs to 899 residues: Gamma-aminobutyric acid type B receptor subunit 1 (899 aa).

The signal sequence occupies residues 1–19 (MFVRSSWLLLWGTIVWASA). Residues 20–447 (EPVTLHIGGT…KKHAMTVSNE (428 aa)) are Extracellular-facing. Residues Asn-69, Asn-266, Asn-339, Asn-353, and Asn-371 are each glycosylated (N-linked (GlcNAc...) asparagine). A helical transmembrane segment spans residues 448–468 (FYYPTILFAVLGIAACVFIYL). Topologically, residues 469-487 (FTQKHHERLIIFQSQPECN) are cytoplasmic. Residues 488-508 (NILLIGCSLCLFSLFLIGLPS) form a helical membrane-spanning segment. Residues 509-525 (DDISISESLFPLLCHAR) lie on the Extracellular side of the membrane. A helical transmembrane segment spans residues 526–546 (VTILLFGFTFAYGSMFAKVWI). Residues 547-616 (VHRMGATENQ…LNQPISSSKF (70 aa)) lie on the Cytoplasmic side of the membrane. A helical transmembrane segment spans residues 617 to 637 (YVIVAALTAVDVFVCFVWVLI). Residues 638–674 (DPLHLTEQKFPLFTPADSEEDEMIMPVLQQCQSNQQE) lie on the Extracellular side of the membrane. Residues 675-695 (VWIGIIMGFKCLLLVFGTFLS) form a helical membrane-spanning segment. The Cytoplasmic segment spans residues 696 to 713 (YETRNLKLRFINDSRFVG). Residues 714-734 (LAIYNVAVMTLVTAPVVTLLI) traverse the membrane as a helical segment. Over 735–741 (HGKVDAN) the chain is Extracellular. Residues 742 to 762 (FAFISLTVLICTYISVGLIYG) form a helical membrane-spanning segment. At 763–899 (PKIRHIIKVP…SSTSSDEILL (137 aa)) the chain is on the cytoplasmic side. Residues 791 to 842 (KVDQKRYDMLKKENETLQIQIEEKERKIHECKERLEELTKNSETEDMNAQLL) are a coiled coil. The disordered stretch occupies residues 870–899 (DLQNGNHPGQIYENDNDDDGSSTSSDEILL). Positions 890–899 (SSTSSDEILL) are enriched in low complexity.

This sequence belongs to the G-protein coupled receptor 3 family. In terms of assembly, may form a heterodimer with gbb-2. Expressed in the nervous system, including cholinergic motor neurons, but not in GABAergic motor neurons or muscle.

It localises to the cell membrane. Functionally, component of a heterodimeric G-protein coupled receptor for GABA, formed by gbb-1 and gbb-2. Within the heterodimeric GABA receptor, only gbb-1 seems to bind agonists, while gbb-2 mediates coupling to G proteins. Ligand binding causes a conformation change that triggers signaling via guanine nucleotide-binding proteins (G proteins) and modulates the activity of down-stream effectors, such as adenylate cyclase. Signaling inhibits adenylate cyclase, stimulates phospholipase A2, activates potassium channels, inactivates voltage-dependent calcium-channels and modulates inositol phospholipid hydrolysis. Calcium is required for high affinity binding to GABA. Plays a critical role in the fine-tuning of inhibitory synaptic transmission. Pre-synaptic GABA receptor inhibits neurotransmitter release by down-regulating high-voltage activated calcium channels, whereas postsynaptic GABA receptor decreases neuronal excitability by activating a prominent inwardly rectifying potassium (Kir) conductance that underlies the late inhibitory postsynaptic potentials. Along with gbb-2, may couple to the G(o)-alpha G-protein goa-1 to negatively regulate cholinergic receptor activity in the presence of high levels of acetylcholine in ventral cord motor neurons. As acetylcholine depolarizes body wall muscles, modulation of acetylcholine levels most likely results in the control of locomotory behavior. Acts in neurons to regulate lifespan, and this may be through G-protein-egl-8/PLC-beta signaling to the transcription factor daf-16/FOXO. The chain is Gamma-aminobutyric acid type B receptor subunit 1 from Caenorhabditis elegans.